Reading from the N-terminus, the 172-residue chain is DCC family protein At1g52590, chloroplastic (172 aa).

Residues 1-25 (MAILIPASFGRLTITSRAQVRVRVS) constitute a chloroplast transit peptide.

The protein belongs to the DCC thiol-disulfide oxidoreductase family.

The protein resides in the plastid. Its subcellular location is the chloroplast. The polypeptide is DCC family protein At1g52590, chloroplastic (Arabidopsis thaliana (Mouse-ear cress)).